Consider the following 154-residue polypeptide: Protein X (154 aa).

Residues 68-117 (PCALRFTSARRMETTVNAHQVLPKVLHKRTLGLSAMSTTDLEAYFKDCLF) form a mitochondrial targeting sequence region.

Belongs to the orthohepadnavirus protein X family. May form homodimer. May interact with host CEBPA, CFLAR, CREB1, DDB1, E4F1, HBXIP, HSPD1/HSP60, NFKBIA, POLR2E and SMAD4. Interacts with host SMC5-SMC6 complex and induces its degradation. Interacts with host TRPC4AP; leading to prevent ubiquitination of TRPC4AP. Interacts with host PLSCR1; this interaction promotes ubiquitination and degradation of HBx and impairs HBx-mediated cell proliferation. Post-translationally, a fraction may be phosphorylated in insect cells and HepG2 cells, a human hepatoblastoma cell line. Phosphorylated in vitro by host protein kinase C or mitogen-activated protein kinase. N-acetylated in insect cells.

Its subcellular location is the host cytoplasm. The protein resides in the host nucleus. It is found in the host mitochondrion. Its function is as follows. Multifunctional protein that plays a role in silencing host antiviral defenses and promoting viral transcription. Does not seem to be essential for HBV infection. May be directly involved in development of cirrhosis and liver cancer (hepatocellular carcinoma). Most of cytosolic activities involve modulation of cytosolic calcium. The effect on apoptosis is controversial depending on the cell types in which the studies have been conducted. May induce apoptosis by localizing in mitochondria and causing loss of mitochondrial membrane potential. May also modulate apoptosis by binding host CFLAR, a key regulator of the death-inducing signaling complex (DISC). Promotes viral transcription by using the host E3 ubiquitin ligase DDB1 to target the SMC5-SMC6 complex to proteasomal degradation. This host complex would otherwise bind to viral episomal DNA, and prevents its transcription. Moderately stimulates transcription of many different viral and cellular transcription elements. Promoters and enhancers stimulated by HBx contain DNA binding sites for NF-kappa-B, AP-1, AP-2, c-EBP, ATF/CREB, or the calcium-activated factor NF-AT. The protein is Protein X of Hepatitis B virus genotype C subtype adr (isolate Japan/Nishioka/1983) (HBV-C).